The sequence spans 180 residues: Oligoribonuclease (180 aa).

Positions 7 to 170 (LIWIDLEMTG…DDIRESIAEL (164 aa)) constitute an Exonuclease domain. Tyrosine 128 is a catalytic residue.

Belongs to the oligoribonuclease family.

The protein resides in the cytoplasm. In terms of biological role, 3'-to-5' exoribonuclease specific for small oligoribonucleotides. This Pseudomonas paraeruginosa (strain DSM 24068 / PA7) (Pseudomonas aeruginosa (strain PA7)) protein is Oligoribonuclease.